Reading from the N-terminus, the 509-residue chain is Bifunctional purine biosynthesis protein PurH (509 aa).

The MGS-like domain occupies 1-144; that stretch reads MKRALISVSD…KNYAAVTVVV (144 aa).

Belongs to the PurH family.

It catalyses the reaction (6R)-10-formyltetrahydrofolate + 5-amino-1-(5-phospho-beta-D-ribosyl)imidazole-4-carboxamide = 5-formamido-1-(5-phospho-D-ribosyl)imidazole-4-carboxamide + (6S)-5,6,7,8-tetrahydrofolate. The enzyme catalyses IMP + H2O = 5-formamido-1-(5-phospho-D-ribosyl)imidazole-4-carboxamide. It functions in the pathway purine metabolism; IMP biosynthesis via de novo pathway; 5-formamido-1-(5-phospho-D-ribosyl)imidazole-4-carboxamide from 5-amino-1-(5-phospho-D-ribosyl)imidazole-4-carboxamide (10-formyl THF route): step 1/1. It participates in purine metabolism; IMP biosynthesis via de novo pathway; IMP from 5-formamido-1-(5-phospho-D-ribosyl)imidazole-4-carboxamide: step 1/1. This Listeria monocytogenes serotype 4b (strain CLIP80459) protein is Bifunctional purine biosynthesis protein PurH.